We begin with the raw amino-acid sequence, 229 residues long: Uracil-DNA glycosylase (229 aa).

D64 acts as the Proton acceptor in catalysis.

Belongs to the uracil-DNA glycosylase (UDG) superfamily. UNG family. Monomer.

Its subcellular location is the cytoplasm. The catalysed reaction is Hydrolyzes single-stranded DNA or mismatched double-stranded DNA and polynucleotides, releasing free uracil.. In terms of biological role, excises uracil residues from the DNA which can arise as a result of misincorporation of dUMP residues by DNA polymerase or due to deamination of cytosine. This chain is Uracil-DNA glycosylase, found in Escherichia coli O157:H7.